A 294-amino-acid chain; its full sequence is NAD kinase (294 aa).

Asp-72 serves as the catalytic Proton acceptor. NAD(+)-binding positions include 72–73 (DG), 146–147 (ND), Arg-157, Arg-174, Asp-176, 187–192 (TAYALS), and Gln-247.

Belongs to the NAD kinase family. A divalent metal cation serves as cofactor.

Its subcellular location is the cytoplasm. It carries out the reaction NAD(+) + ATP = ADP + NADP(+) + H(+). In terms of biological role, involved in the regulation of the intracellular balance of NAD and NADP, and is a key enzyme in the biosynthesis of NADP. Catalyzes specifically the phosphorylation on 2'-hydroxyl of the adenosine moiety of NAD to yield NADP. The chain is NAD kinase from Saccharophagus degradans (strain 2-40 / ATCC 43961 / DSM 17024).